The sequence spans 43 residues: Cytochrome b559 subunit beta (43 aa).

Residues 18–34 (WLAVHTLAVPSVFFLGA) traverse the membrane as a helical segment. H22 is a binding site for heme.

Belongs to the PsbE/PsbF family. As to quaternary structure, heterodimer of an alpha subunit and a beta subunit. PSII is composed of 1 copy each of membrane proteins PsbA, PsbB, PsbC, PsbD, PsbE, PsbF, PsbH, PsbI, PsbJ, PsbK, PsbL, PsbM, PsbT, PsbX, PsbY, PsbZ, Psb30/Ycf12, peripheral proteins PsbO, CyanoQ (PsbQ), PsbU, PsbV and a large number of cofactors. It forms dimeric complexes. Heme b is required as a cofactor.

The protein resides in the cellular thylakoid membrane. Functionally, this b-type cytochrome is tightly associated with the reaction center of photosystem II (PSII). PSII is a light-driven water:plastoquinone oxidoreductase that uses light energy to abstract electrons from H(2)O, generating O(2) and a proton gradient subsequently used for ATP formation. It consists of a core antenna complex that captures photons, and an electron transfer chain that converts photonic excitation into a charge separation. The chain is Cytochrome b559 subunit beta from Picosynechococcus sp. (strain ATCC 27264 / PCC 7002 / PR-6) (Agmenellum quadruplicatum).